We begin with the raw amino-acid sequence, 377 residues long: Deoxyribonuclease CdiA-o11 (377 aa).

A VENN CT cleavage motif motif is present at residues 81 to 84 (VENN). Residues 85-233 (YLSTNQSLTF…ISFMSRNTAT (149 aa)) are inner membrane translocation domain (IMTD), targets to YciB. The tract at residues 88-377 (TNQSLTFDKE…GVKVTVTQVK (290 aa)) is CT domain, sufficient to interact with CdiI. Residues 222 to 377 (AAISFMSRNT…GVKVTVTQVK (156 aa)) are has DNase activity in vivo, cannot be expressed in the absence of CdiI. Residues glutamate 257, aspartate 278, serine 289, and lysine 291 contribute to the active site. Zn(2+) contacts are provided by glutamate 257 and aspartate 278.

In terms of assembly, interacts with cognate immunity protein CdiI-o11-EC869, which blocks its toxic DNase activity. Zn(2+) serves as cofactor.

The protein resides in the target cell. It localises to the target cell cytoplasm. Functionally, toxic component of a toxin-immunity protein module, which functions as a cellular contact-dependent growth inhibition (CDI) system. CDI modules allow bacteria to communicate with and inhibit the growth of closely related neighboring bacteria in a contact-dependent fashion. The C-terminal 289 residues (the CT fragment) has a strong DNase activity in the presence of Zn(2+), completely degrading supercoiled and linear plasmids, and inhibits growth. In the presence of Mg(2+) it nicks dsDNA. Toxic activity is neutralized by coexpression of the cognate immunity protein CdiI-o11-EC869, but not by non-cognate immunity proteins from other toxin-immunity modules or other strains of E.coli. Gains access to the cytoplasm of target cells by using integral inner membrane protein YciB. In terms of biological role, expression of this locus confers protection against other bacteria carrying the locus. The polypeptide is Deoxyribonuclease CdiA-o11 (cdiA4) (Escherichia coli O157:H7 (strain EC869)).